A 1234-amino-acid polypeptide reads, in one-letter code: Coiled-coil domain-containing protein CG32809 (1234 aa).

Residues 1 to 11 are compositionally biased toward basic and acidic residues; the sequence is MLIRWKSKDKS. 3 disordered regions span residues 1–88, 107–129, and 330–350; these read MLIR…HAHQ, KNKKNQPMRGYAPVNQGPLFDDD, and KVSMDGYTSSPERSSRGNYEE. The span at 12–25 shows a compositional bias: low complexity; that stretch reads ASSNQSVGGSSSSS. A compositionally biased stretch (basic and acidic residues) spans 55–69; it reads GDERRRAMRRDDPRR. Positions 412–436 form a coiled coil; the sequence is HRIRVEHMERQLANLTGLVQKALVN. The tract at residues 498–548 is disordered; the sequence is DIQGIPKSHNPLHAAETKPTKPAIKSSTLPRTSSQERDRLKPPPPPKPIVL. Coiled coils occupy residues 565 to 594 and 630 to 666; these read EVYNHLRGLQKKAKDLRMEVRTLRRLSQAQ and TRISREEELYKQEVIRLEKDLSDLEGSVENLRGEVIN. Disordered regions lie at residues 754–793, 815–852, 928–1011, and 1028–1070; these read EQRLPPNEPTISEETPRSADISAPDKPIPTPRMGSFALSG, IAQQQQQQQQQQQQQQQQHQHQQLYEIRPEDSASDESA, LHSY…PPNQ, and SANA…ESGN. Composition is skewed to low complexity over residues 817–837, 952–965, 993–1004, 1028–1039, and 1046–1068; these read QQQQQQQQQQQQQQQQHQHQQ, TSSSTSLANGGSSS, TSSRSPLASPTS, SANANANANSNA, and VGETTSVVSGDTSSGDNSSGNES. Residues 1077–1105 adopt a coiled-coil conformation; the sequence is VALEMRHQELLKKQKMLQEQYQRLQQMSK.

This chain is Coiled-coil domain-containing protein CG32809, found in Drosophila melanogaster (Fruit fly).